A 166-amino-acid chain; its full sequence is Dynein regulatory complex protein 8 (166 aa).

In terms of domain architecture, EF-hand spans 95–130 (DDYHTLLRAFRAFDPDGRGFIDAESFKSLLTGKGEA).

It belongs to the DRC8 family. As to quaternary structure, component of the nexin-dynein regulatory complex (N-DRC).

It is found in the cytoplasm. It localises to the cytoskeleton. The protein resides in the flagellum axoneme. Its function is as follows. Component of the nexin-dynein regulatory complex (N-DRC), a key regulator of ciliary/flagellar motility which maintains the alignment and integrity of the distal axoneme and regulates microtubule sliding in motile axonemes. This is Dynein regulatory complex protein 8 from Chlamydomonas reinhardtii (Chlamydomonas smithii).